We begin with the raw amino-acid sequence, 400 residues long: Endophilin-B2 (400 aa).

M1 bears the N-acetylmethionine mark. The segment at 1-27 (MDFNMKKLASDAGIFFTRAVQFTEEKF) is membrane-binding amphipathic helix. S10 carries the phosphoserine modification. The BAR domain occupies 24 to 287 (EEKFGQAEKT…LGSSQGAIFP (264 aa)). A coiled-coil region spans residues 205–234 (SASALWNDEVDKAEQELRVAQTEFDRQAEV). The SH3 domain maps to 340 to 400 (SGTRKARVLY…VPVTYLELLS (61 aa)). Phosphoserine is present on S400.

The protein belongs to the endophilin family. In terms of assembly, homodimer, and heterodimer with SH3GLB1.

The protein resides in the cytoplasm. This Mus musculus (Mouse) protein is Endophilin-B2 (Sh3glb2).